Here is a 181-residue protein sequence, read N- to C-terminus: Acireductone dioxygenase (181 aa).

Positions 97, 99, 103, and 141 each coordinate Fe(2+). Ni(2+) is bound by residues His97, His99, Glu103, and His141.

It belongs to the acireductone dioxygenase (ARD) family. As to quaternary structure, monomer. Fe(2+) is required as a cofactor. Ni(2+) serves as cofactor.

It carries out the reaction 1,2-dihydroxy-5-(methylsulfanyl)pent-1-en-3-one + O2 = 3-(methylsulfanyl)propanoate + CO + formate + 2 H(+). The catalysed reaction is 1,2-dihydroxy-5-(methylsulfanyl)pent-1-en-3-one + O2 = 4-methylsulfanyl-2-oxobutanoate + formate + 2 H(+). It participates in amino-acid biosynthesis; L-methionine biosynthesis via salvage pathway; L-methionine from S-methyl-5-thio-alpha-D-ribose 1-phosphate: step 5/6. Its function is as follows. Catalyzes 2 different reactions between oxygen and the acireductone 1,2-dihydroxy-3-keto-5-methylthiopentene (DHK-MTPene) depending upon the metal bound in the active site. Fe-containing acireductone dioxygenase (Fe-ARD) produces formate and 2-keto-4-methylthiobutyrate (KMTB), the alpha-ketoacid precursor of methionine in the methionine recycle pathway. Ni-containing acireductone dioxygenase (Ni-ARD) produces methylthiopropionate, carbon monoxide and formate, and does not lie on the methionine recycle pathway. The sequence is that of Acireductone dioxygenase from Pseudomonas syringae pv. syringae (strain B728a).